The following is a 479-amino-acid chain: UDP-N-acetylmuramoyl-L-alanyl-D-glutamate--2,6-diaminopimelate ligase (479 aa).

Ser21 contacts UDP-N-acetyl-alpha-D-muramoyl-L-alanyl-D-glutamate. 98–104 (GTNGKSS) is an ATP binding site. Residues 144–145 (TT), Ser171, Gln177, and Arg179 each bind UDP-N-acetyl-alpha-D-muramoyl-L-alanyl-D-glutamate. Lys211 is modified (N6-carboxylysine). Meso-2,6-diaminopimelate-binding positions include Arg372, 396-399 (DNPR), Gly446, and Glu450. Residues 396–399 (DNPR) carry the Meso-diaminopimelate recognition motif motif.

This sequence belongs to the MurCDEF family. MurE subfamily. It depends on Mg(2+) as a cofactor. In terms of processing, carboxylation is probably crucial for Mg(2+) binding and, consequently, for the gamma-phosphate positioning of ATP.

The protein localises to the cytoplasm. The catalysed reaction is UDP-N-acetyl-alpha-D-muramoyl-L-alanyl-D-glutamate + meso-2,6-diaminopimelate + ATP = UDP-N-acetyl-alpha-D-muramoyl-L-alanyl-gamma-D-glutamyl-meso-2,6-diaminopimelate + ADP + phosphate + H(+). It participates in cell wall biogenesis; peptidoglycan biosynthesis. Catalyzes the addition of meso-diaminopimelic acid to the nucleotide precursor UDP-N-acetylmuramoyl-L-alanyl-D-glutamate (UMAG) in the biosynthesis of bacterial cell-wall peptidoglycan. In Rickettsia conorii (strain ATCC VR-613 / Malish 7), this protein is UDP-N-acetylmuramoyl-L-alanyl-D-glutamate--2,6-diaminopimelate ligase.